The following is a 542-amino-acid chain: Leucine-rich repeat-containing protein 56 (542 aa).

5 LRR repeats span residues 94 to 115 (NLDQLKLNGSHLGSLRDLGTSL), 117 to 138 (HLQVLWLARCGLADLDGIASLP), 139 to 160 (ALKELYASYNNISDLSPLCLLE), 161 to 182 (QLEVLDLEGNSVEDLGQVRYLQ), and 186 to 206 (RLAMLTLEGNLVCLQPAPGPT). In terms of domain architecture, LRRCT spans 207–250 (NKVPRGYNYRAEVRKLIPQLQVLDEVPAAHTGPPAPPRLSQDWL). 3 disordered regions span residues 308-377 (LLSE…ADSS), 396-475 (LPYR…LQSR), and 507-542 (RLSPRAQGCPGPKPAPDAAARPPRAAELSHPSPVPT). Basic and acidic residues predominate over residues 416–426 (RVPEEQVHQAE). A compositionally biased stretch (low complexity) spans 522–532 (PDAAARPPRAA).

The protein belongs to the LRRC56 family. Interacts with IFT88.

It localises to the cell projection. The protein resides in the cilium. In terms of biological role, required for the assembly of dynein arms. This is Leucine-rich repeat-containing protein 56 (LRRC56) from Homo sapiens (Human).